Here is a 595-residue protein sequence, read N- to C-terminus: MPAERRRRAVTLASRLVAAAISLTAAAGAFFLFLQFGSTDGLDSMDITRSVLILVSTSWLGWGAAHAVLGLFSRPQRPANVSPDAPISTRTVILVPVYNEDPVATFSRIAAMDASLAATPWRDLFHFAILSDTRDEAIAARERFWFLRLLRERDAEGRIFYRRRAVNRGRKAGNIEDFIQKSGSAYPFAVILDADSLMEGETLVDMVRRMEAEPRLGLLQTLPVVTKARARFGRSMQFSAALHAPVFARGLAMMQGRTGPFWGHNAIVRVQAFAESCGLPELSGPPPFGGHVMSHDYVEAALLARAGWIVRFDDDIRGSYEEGPENLVDHAKRDRRWCQGNLQHGRILFAPGLCGWNRFVFLQGIMAYIAPLFWLGFIMASIAAPFFAPPLDYFPVPYWPFPVFPSDETWKAIGLAVGIFGLLLLPKLMIAIEAIVTGRAAGFGGAGRVLVSTLAELVFSSIIAPILMAFQTRSVLQVLLGRDGGWPTNNRGDGSLSVAQAWSASHWIVTWGLIGIGATYYFAPGLVPWLLPVALPMIFSPLVIAVTSKRSRSALFTMPLEVAPTPVLLAHDAILADWERSPAPEAVPALAVSHA.

Transmembrane regions (helical) follow at residues 13-35 (ASRLVAAAISLTAAAGAFFLFLQ), 50-72 (SVLILVSTSWLGWGAAHAVLGLF), 365-387 (IMAYIAPLFWLGFIMASIAAPFF), 414-436 (GLAVGIFGLLLLPKLMIAIEAIV), 449-471 (VLVSTLAELVFSSIIAPILMAFQ), and 526-548 (LVPWLLPVALPMIFSPLVIAVTS).

The protein belongs to the glycosyltransferase 2 family. OpgH subfamily.

Its subcellular location is the cell inner membrane. It functions in the pathway glycan metabolism; osmoregulated periplasmic glucan (OPG) biosynthesis. Functionally, involved in the biosynthesis of osmoregulated periplasmic glucans (OPGs). The protein is Glucans biosynthesis glucosyltransferase H (opgH) of Cereibacter sphaeroides (strain ATCC 17023 / DSM 158 / JCM 6121 / CCUG 31486 / LMG 2827 / NBRC 12203 / NCIMB 8253 / ATH 2.4.1.) (Rhodobacter sphaeroides).